A 362-amino-acid polypeptide reads, in one-letter code: Cobalt-precorrin-5B C(1)-methyltransferase (362 aa).

The protein belongs to the CbiD family.

The catalysed reaction is Co-precorrin-5B + S-adenosyl-L-methionine = Co-precorrin-6A + S-adenosyl-L-homocysteine. The protein operates within cofactor biosynthesis; adenosylcobalamin biosynthesis; cob(II)yrinate a,c-diamide from sirohydrochlorin (anaerobic route): step 6/10. Its function is as follows. Catalyzes the methylation of C-1 in cobalt-precorrin-5B to form cobalt-precorrin-6A. The chain is Cobalt-precorrin-5B C(1)-methyltransferase from Burkholderia ambifaria (strain MC40-6).